The chain runs to 832 residues: Thymine dioxygenase JBP1-A (832 aa).

Basic and acidic residues predominate over residues 1-12 (MKQKRGKQDVKM). The segment at 1 to 24 (MKQKRGKQDVKMLESAPPQLLPKK) is disordered. The segment at 80 to 282 (VVGGVFLPGA…RLTCVCYYRA (203 aa)) is thymine dioxygenase. Fe cation-binding residues include His207, Asp209, and His257. Arg273 serves as a coordination point for 2-oxoglutarate. Residues 409 to 578 (LGGALKAAEE…IEEARRRGSS (170 aa)) are DNA-binding JBP1 domain.

Belongs to the TET family. JBP1 subfamily. Monomer. Binds to DNA as a monomer. It depends on Fe(2+) as a cofactor.

The protein resides in the nucleus. The enzyme catalyses thymine + 2-oxoglutarate + O2 = 5-hydroxymethyluracil + succinate + CO2. Its function is as follows. Dioxygenase that catalyzes the first step of DNA base J (beta-d-glucosyl-HOMedU) biosynthesis by converting thymine to 5-hydroxymethyluracil (HOMedU). DNA base J is a hypermodified thymidine residue found in the genome of kinetoplastid parasites, which is localized primarily to repetitive DNA, namely the telomeres, and is implicated in the regulation of antigenic variation. Also specifically binds to base J-containing DNA (J-DNA). Involved in propagation and maintenance of DNA base J synthesis initiated by JBP2 by specifically binding already synthesized DNA base J and propagating J synthesis. Thymine dioxygenase activity and J-DNA-binding are independent functions. This is Thymine dioxygenase JBP1-A (JBP1A) from Trypanosoma cruzi (strain CL Brener).